The chain runs to 170 residues: Envelope protein 166 (170 aa).

Residue Met1 is a topological domain, intravirion. Residues 2–22 (FYPVVQVLIGIILVIILILGF) form a helical membrane-spanning segment. Residues 23 to 170 (YHMKHKPPKK…TVMGIARNVL (148 aa)) are Virion surface-facing.

Belongs to the asfivirus envelope protein p22 family.

It is found in the virion membrane. The protein localises to the host cell membrane. The sequence is that of Envelope protein 166 from Ornithodoros (relapsing fever ticks).